Reading from the N-terminus, the 445-residue chain is MDSSYGATKFLLLLFLTTSIATALPDNKPVPGQINSNSVLVALLDSHYTELAELVEKALLLQTLEEAVGKHNITIFAPRNDALERNLDPLFKSFLLEPRNLKSLQSLLMFHILPKRITSPQWPSLSHHHRTLSNDHLHLTVDVNTLKVDSAEIIRPDDVIRPDGIIHGIERLLIPRSVQEDFNRRRSLRSISAVIPEGAPEVDPRTHRLKKPSPAVPAGAPPVLPIYDAMSPGPSLAPAPAPGPGGPRGHFNGDAQVKDFIHTLLHYGGYNEMADILVNLTSLATEMGRLVSEGYVLTVLAPNDEAMAKLTTDQLSEPGAPEQIMYYHIIPEYQTEESMYNAVRRFGKVKYDSLRFPHKVLAQEADGSVKFGHGDGSAYLFDPDIYTDGRISVQGIDGVLFPKEETPATEIKPAAPVVKKVSKSRRGKLMEVACRMMGSRFIPCQ.

Positions 1 to 23 (MDSSYGATKFLLLLFLTTSIATA) are cleaved as a signal peptide. 2 consecutive FAS1 domains span residues 35–173 (NSNS…ERLL) and 257–400 (VKDF…DGVL). N72 and N279 each carry an N-linked (GlcNAc...) asparagine glycan.

This sequence belongs to the fasciclin-like AGP family.

It is found in the secreted. In terms of biological role, may be a cell surface adhesion protein. The polypeptide is Fasciclin-like arabinogalactan protein 16 (FLA16) (Arabidopsis thaliana (Mouse-ear cress)).